The primary structure comprises 94 residues: Sulfocarbamoylase-1 (94 aa).

Homodimer. As to expression, ubiquitous (at protein level). Highest levels of expression in crystalline style followed by digestive gland and mantle.

Its activity is regulated as follows. Strongly inhibited by the serine proteinase inhibitor AEBSF. Weakly inhibited by the proteinase inhibitors BSF and aprotinin, and by EDTA. Not inhibited by the proteinase inhibitors bestatin, E-64 and leupeptin. Functionally, hydrolysis of sulfocarbamoyl esters of paralytic shellfish toxins. Does not hydrolyze the carbamoyl esters of paralytic shellfish toxins. Ester hydrolysis is significantly affected by the stereochemistry of sulfate esters at C-11 of the substrate toxin. The chain is Sulfocarbamoylase-1 from Megangulus venulosus (Japanese bivalve).